The chain runs to 267 residues: tRNA pseudouridine synthase A (267 aa).

Aspartate 53 functions as the Nucleophile in the catalytic mechanism. Tyrosine 114 is a substrate binding site.

The protein belongs to the tRNA pseudouridine synthase TruA family. Homodimer.

The catalysed reaction is uridine(38/39/40) in tRNA = pseudouridine(38/39/40) in tRNA. In terms of biological role, formation of pseudouridine at positions 38, 39 and 40 in the anticodon stem and loop of transfer RNAs. The protein is tRNA pseudouridine synthase A of Chlamydia muridarum (strain MoPn / Nigg).